Consider the following 85-residue polypeptide: Large ribosomal subunit protein bL27 (85 aa).

Residues 1–22 (MAHKKGQGSSRNGRDSPGQRRG) are disordered.

Belongs to the bacterial ribosomal protein bL27 family.

The chain is Large ribosomal subunit protein bL27 from Anaeromyxobacter dehalogenans (strain 2CP-1 / ATCC BAA-258).